Consider the following 159-residue polypeptide: Protein US8.5 (159 aa).

The tract at residues Ser27–Gly107 is disordered. Residues Ser80–Pro91 are compositionally biased toward basic and acidic residues.

This sequence belongs to the HHV-1 US8.5 protein family. In terms of processing, phosphorylated.

The protein resides in the host nucleus. It localises to the host nucleolus. This chain is Protein US8.5, found in Human herpesvirus 1 (strain 17) (HHV-1).